The following is a 470-amino-acid chain: Neuraminidase (470 aa).

Residues 1-6 are Intravirion-facing; sequence MNPNQK. Residues 7-27 form a helical membrane-spanning segment; it reads IITIGSICMAIGIISLILQMG. Residues 11–33 are involved in apical transport and lipid raft association; it reads GSICMAIGIISLILQMGNIISIW. Over 28–470 the chain is Virion surface; that stretch reads NIISIWVSHS…GAELPFTIDK (443 aa). The segment at 36 to 90 is hypervariable stalk region; sequence HSIQTGSQNHTGICNQRIITYENSTWVNQTYVNINNTNVVAGKDTTSVTLAGNSS. 5 N-linked (GlcNAc...) asparagine; by host glycosylation sites follow: asparagine 44, asparagine 58, asparagine 63, asparagine 70, and asparagine 88. A head of neuraminidase region spans residues 91-470; the sequence is LCPIRGWAIY…GAELPFTIDK (380 aa). Disulfide bonds link cysteine 92–cysteine 417, cysteine 124–cysteine 129, cysteine 184–cysteine 231, cysteine 233–cysteine 238, cysteine 279–cysteine 292, cysteine 281–cysteine 290, cysteine 318–cysteine 335, and cysteine 421–cysteine 447. Arginine 118 serves as a coordination point for substrate. An N-linked (GlcNAc...) asparagine; by host glycan is attached at asparagine 146. Residue aspartate 151 is the Proton donor/acceptor of the active site. A substrate-binding site is contributed by arginine 152. Asparagine 235 is a glycosylation site (N-linked (GlcNAc...) asparagine; by host). Position 277–278 (277–278) interacts with substrate; that stretch reads EE. Position 293 (arginine 293) interacts with substrate. Residues aspartate 294, glycine 298, and aspartate 324 each contribute to the Ca(2+) site. A glycan (N-linked (GlcNAc...) asparagine; by host) is linked at asparagine 365. Arginine 368 contacts substrate. Tyrosine 402 functions as the Nucleophile in the catalytic mechanism. Asparagine 455 is a glycosylation site (N-linked (GlcNAc...) asparagine; by host).

The protein belongs to the glycosyl hydrolase 34 family. In terms of assembly, homotetramer. It depends on Ca(2+) as a cofactor. Post-translationally, N-glycosylated.

It is found in the virion membrane. It localises to the host apical cell membrane. It catalyses the reaction Hydrolysis of alpha-(2-&gt;3)-, alpha-(2-&gt;6)-, alpha-(2-&gt;8)- glycosidic linkages of terminal sialic acid residues in oligosaccharides, glycoproteins, glycolipids, colominic acid and synthetic substrates.. Its activity is regulated as follows. Inhibited by the neuraminidase inhibitors zanamivir (Relenza) and oseltamivir (Tamiflu). These drugs interfere with the release of progeny virus from infected cells and are effective against all influenza strains. Resistance to neuraminidase inhibitors is quite rare. Functionally, catalyzes the removal of terminal sialic acid residues from viral and cellular glycoconjugates. Cleaves off the terminal sialic acids on the glycosylated HA during virus budding to facilitate virus release. Additionally helps virus spread through the circulation by further removing sialic acids from the cell surface. These cleavages prevent self-aggregation and ensure the efficient spread of the progeny virus from cell to cell. Otherwise, infection would be limited to one round of replication. Described as a receptor-destroying enzyme because it cleaves a terminal sialic acid from the cellular receptors. May facilitate viral invasion of the upper airways by cleaving the sialic acid moieties on the mucin of the airway epithelial cells. Likely to plays a role in the budding process through its association with lipid rafts during intracellular transport. May additionally display a raft-association independent effect on budding. Plays a role in the determination of host range restriction on replication and virulence. Sialidase activity in late endosome/lysosome traffic seems to enhance virus replication. This Aves (Human) protein is Neuraminidase.